Consider the following 108-residue polypeptide: uncharacterized protein (108 aa).

Residues 1 to 16 form the signal peptide; sequence MKKLILIAIMASGLVA. Residue C17 is the site of N-palmitoyl cysteine attachment. C17 carries S-diacylglycerol cysteine lipidation.

It localises to the cell membrane. This is an uncharacterized protein from Escherichia coli (strain K12).